The sequence spans 423 residues: MDRSLELFQIAKNLFPGGVNSPIRAAVKPYPFYVKKASGATLVTVDGVELIDYVLGYGPLILGHMHPKVLEAVEEQLNRGWLYGTPHELEIELAKKIVSHYPSIDMVRFVNSGTEATMTAIRLARGFTKKNKIIKFDGCYHGAHDSVLVKAGSAVSHFGVPGSAGVPEEVSKLTLVVPFNDVEAVEKVAKENQDDLAAIIVEPVMGNAGVIPPKEGFLKELRRIADETGALLIFDEVITGYRLGLGGAQAKFGVVPDLTTLGKIVGGGFPVGVVGGKREIMEYLTPSGPVFNAGTFNAHPVTMAAGLATINELERGYVYEVANSAAEKVAKALEQEAVAKFGGVVHRVASMFQWFPGVEEVNNYADALKANKEISLRLHEELLKRGVFIAPSLFEAWFTSAAHGEDVVNKTLEALSEALKVIS.

N6-(pyridoxal phosphate)lysine is present on Lys-263.

This sequence belongs to the class-III pyridoxal-phosphate-dependent aminotransferase family. HemL subfamily. The cofactor is pyridoxal 5'-phosphate.

It localises to the cytoplasm. The catalysed reaction is (S)-4-amino-5-oxopentanoate = 5-aminolevulinate. It functions in the pathway porphyrin-containing compound metabolism; protoporphyrin-IX biosynthesis; 5-aminolevulinate from L-glutamyl-tRNA(Glu): step 2/2. This chain is Glutamate-1-semialdehyde 2,1-aminomutase, found in Ignicoccus hospitalis (strain KIN4/I / DSM 18386 / JCM 14125).